We begin with the raw amino-acid sequence, 22 residues long: 5-methyltetrahydropteroyltriglutamate--homocysteine methyltransferase (22 aa).

Belongs to the vitamin-B12 independent methionine synthase family. The cofactor is Zn(2+).

The protein localises to the cytoplasm. It catalyses the reaction 5-methyltetrahydropteroyltri-L-glutamate + L-homocysteine = tetrahydropteroyltri-L-glutamate + L-methionine. It participates in amino-acid biosynthesis; L-methionine biosynthesis via de novo pathway; L-methionine from L-homocysteine (MetE route): step 1/1. Functionally, catalyzes the transfer of a methyl group from 5-methyltetrahydrofolate to homocysteine resulting in methionine formation. This is 5-methyltetrahydropteroyltriglutamate--homocysteine methyltransferase from Pseudotsuga menziesii (Douglas-fir).